The chain runs to 506 residues: ATP synthase subunit alpha (506 aa).

171-178 (GDRQTGKT) provides a ligand contact to ATP.

The protein belongs to the ATPase alpha/beta chains family. As to quaternary structure, F-type ATPases have 2 components, CF(1) - the catalytic core - and CF(0) - the membrane proton channel. CF(1) has five subunits: alpha(3), beta(3), gamma(1), delta(1), epsilon(1). CF(0) has four main subunits: a(1), b(1), b'(1) and c(9-12).

It is found in the cellular thylakoid membrane. The catalysed reaction is ATP + H2O + 4 H(+)(in) = ADP + phosphate + 5 H(+)(out). In terms of biological role, produces ATP from ADP in the presence of a proton gradient across the membrane. The alpha chain is a regulatory subunit. This chain is ATP synthase subunit alpha, found in Nostoc sp. (strain PCC 7120 / SAG 25.82 / UTEX 2576).